A 265-amino-acid polypeptide reads, in one-letter code: Adenosylcobinamide-GDP ribazoletransferase (265 aa).

A run of 7 helical transmembrane segments spans residues 40–60 (IAYAIPLAGAVIGLIGAVVLV), 67–87 (LPAFLASVLAVTALVLTTGAF), 121–141 (GGCALILALLLRVAALEALVA), 150–170 (LALVVAEAASRAAGVLLLLAL), 191–211 (LACALVAALLVVVILVPGFGI), 213–233 (TAFAGLIAPLVALFAMMRLSG), and 243–263 (VAGATQQVAVIVFLLGVLIFP).

The protein belongs to the CobS family. Mg(2+) is required as a cofactor.

It is found in the cell inner membrane. It catalyses the reaction alpha-ribazole + adenosylcob(III)inamide-GDP = adenosylcob(III)alamin + GMP + H(+). The enzyme catalyses alpha-ribazole 5'-phosphate + adenosylcob(III)inamide-GDP = adenosylcob(III)alamin 5'-phosphate + GMP + H(+). It participates in cofactor biosynthesis; adenosylcobalamin biosynthesis; adenosylcobalamin from cob(II)yrinate a,c-diamide: step 7/7. Joins adenosylcobinamide-GDP and alpha-ribazole to generate adenosylcobalamin (Ado-cobalamin). Also synthesizes adenosylcobalamin 5'-phosphate from adenosylcobinamide-GDP and alpha-ribazole 5'-phosphate. This is Adenosylcobinamide-GDP ribazoletransferase from Xanthobacter autotrophicus (strain ATCC BAA-1158 / Py2).